The following is a 207-amino-acid chain: High frequency lysogenization protein HflD homolog (207 aa).

Belongs to the HflD family.

The protein resides in the cytoplasm. It localises to the cell inner membrane. This Cellvibrio japonicus (strain Ueda107) (Pseudomonas fluorescens subsp. cellulosa) protein is High frequency lysogenization protein HflD homolog.